Reading from the N-terminus, the 362-residue chain is 3-dehydroquinate synthase (362 aa).

NAD(+)-binding positions include 70 to 75, 104 to 108, 128 to 129, Lys-141, Lys-150, and 168 to 171; these read DGEKYK, GVIGD, TT, and TLNT. Residues Glu-183, His-246, and His-263 each contribute to the Zn(2+) site.

This sequence belongs to the sugar phosphate cyclases superfamily. Dehydroquinate synthase family. The cofactor is Co(2+). Zn(2+) is required as a cofactor. NAD(+) serves as cofactor.

It localises to the cytoplasm. It carries out the reaction 7-phospho-2-dehydro-3-deoxy-D-arabino-heptonate = 3-dehydroquinate + phosphate. It functions in the pathway metabolic intermediate biosynthesis; chorismate biosynthesis; chorismate from D-erythrose 4-phosphate and phosphoenolpyruvate: step 2/7. Functionally, catalyzes the conversion of 3-deoxy-D-arabino-heptulosonate 7-phosphate (DAHP) to dehydroquinate (DHQ). The chain is 3-dehydroquinate synthase from Haemophilus influenzae (strain 86-028NP).